A 574-amino-acid chain; its full sequence is Uric acid-xanthine permease (574 aa).

A disordered region spans residues 1-20; sequence MDNSIHSTDGPDSVIPNSNP. The next 12 membrane-spanning stretches (helical) occupy residues 77–97, 111–131, 141–161, 188–209, 217–237, 264–284, 296–315, 338–361, 427–447, 451–471, 482–502, and 522–542; these read LLAF…VVTP, LQQY…MVQI, YYIG…ISVA, AYGA…LAFV, IFPP…LIGT, LPWG…SIIL, CSVV…CGYF, VYGP…IGDV, CCLI…IVAI, VMGG…QAIV, FILT…TWFG, and LVLE…NAIM. Residues 555-574 are disordered; that stretch reads MPVSAHDNRDGEAEYQSKQA. Lysine 572 participates in a covalent cross-link: Glycyl lysine isopeptide (Lys-Gly) (interchain with G-Cter in ubiquitin).

It belongs to the nucleobase:cation symporter-2 (NCS2) (TC 2.A.40) family. Post-translationally, ubiquitinated by hulA. Ubiquitination leads to internalization, sorting into the endosomal pathway to the vacuolar lumen where uapA is eventually degraded.

Its subcellular location is the cell membrane. Uric acid-xanthine transporter. This is Uric acid-xanthine permease (uapA) from Emericella nidulans (strain FGSC A4 / ATCC 38163 / CBS 112.46 / NRRL 194 / M139) (Aspergillus nidulans).